The following is a 421-amino-acid chain: Acetylglutamate kinase (421 aa).

Positions 1 to 252 are acetylglutamate kinase; the sequence is MASTKEISQY…PLESSVSITR (252 aa). Residues 59-60, R81, and N170 each bind substrate; that span reads AG. The N-acetyltransferase domain occupies 274-420; sequence ERVIRATTWK…HCAQHPPTLI (147 aa).

It in the N-terminal section; belongs to the acetylglutamate kinase family. ArgB subfamily.

The protein localises to the cytoplasm. It carries out the reaction N-acetyl-L-glutamate + ATP = N-acetyl-L-glutamyl 5-phosphate + ADP. Its pathway is amino-acid biosynthesis; L-arginine biosynthesis; N(2)-acetyl-L-ornithine from L-glutamate: step 2/4. This chain is Acetylglutamate kinase (argB), found in Xylella fastidiosa (strain 9a5c).